A 253-amino-acid chain; its full sequence is Ribonuclease HII (253 aa).

The region spanning 70–253 (DLIAGVDEVG…KTFAPIKDIL (184 aa)) is the RNase H type-2 domain. A divalent metal cation is bound by residues Asp-76, Glu-77, and Asp-168.

This sequence belongs to the RNase HII family. The cofactor is Mn(2+). Requires Mg(2+) as cofactor.

It is found in the cytoplasm. The catalysed reaction is Endonucleolytic cleavage to 5'-phosphomonoester.. Its function is as follows. Endonuclease that specifically degrades the RNA of RNA-DNA hybrids. The polypeptide is Ribonuclease HII (Leuconostoc mesenteroides subsp. mesenteroides (strain ATCC 8293 / DSM 20343 / BCRC 11652 / CCM 1803 / JCM 6124 / NCDO 523 / NBRC 100496 / NCIMB 8023 / NCTC 12954 / NRRL B-1118 / 37Y)).